A 456-amino-acid polypeptide reads, in one-letter code: GTPase Der (456 aa).

EngA-type G domains are found at residues Pro4–Glu169 and Ile177–Lys352. GTP contacts are provided by residues Gly10–Ser17, Asp57–Leu61, Asn120–Glu123, Gly183–Ser190, Asp230–Ile234, and Asn295–Asp298. One can recognise a KH-like domain in the interval Arg353–Lys438.

This sequence belongs to the TRAFAC class TrmE-Era-EngA-EngB-Septin-like GTPase superfamily. EngA (Der) GTPase family. In terms of assembly, associates with the 50S ribosomal subunit.

Its function is as follows. GTPase that plays an essential role in the late steps of ribosome biogenesis. The protein is GTPase Der of Nostoc punctiforme (strain ATCC 29133 / PCC 73102).